The primary structure comprises 889 residues: Rho GTPase-activating protein 27 (889 aa).

One can recognise an SH3 domain in the interval 6-69 (VGDVYVLVEH…PAQYVRELPA (64 aa)). Residues 104-132 (AGPDGAPEESGGRASSLCGPAQRGAATQR) are disordered. A phosphoserine mark is found at S156, S216, and S249. WW domains follow at residues 246–280 (PLPS…SPFE) and 299–333 (VSLE…DEAE). Residues 329 to 341 (EDEAENEPEEELE) are compositionally biased toward acidic residues. The disordered stretch occupies residues 329–397 (EDEAENEPEE…SPLTTPPGWS (69 aa)). S347 is subject to Phosphoserine. The span at 383–395 (EPGPTSPLTTPPG) shows a compositional bias: low complexity. The region spanning 411–444 (HFTQEQWVRLEDPHGKPYFYNPEDSSVRWELPQV) is the WW 3 domain. Residues 447–474 (PAPRSIHKSSQDGDTPAQASPPEEKVPA) are disordered. Position 456 is a phosphoserine (S456). Residue T461 is modified to Phosphothreonine. S466 is modified (phosphoserine). The region spanning 496–612 (TLDKAGVLHR…WHKAIAQGIQ (117 aa)) is the PH domain. Positions 617-655 (ELPPEESESSRVDFGSSERLGSWQEKEEDARPNAAAPAL) are disordered. In terms of domain architecture, Rho-GAP spans 697–886 (CALAALCERE…LILQQCADIF (190 aa)).

In terms of assembly, interacts with SH3KBP1/CIN85. Expressed in germinal center B-cell, spleen, chronic lymphocytic leukemia, pancreatic cancer and lung cancer.

The protein resides in the cytoplasm. Its subcellular location is the membrane. In terms of biological role, rho GTPase-activating protein which may be involved in clathrin-mediated endocytosis. GTPase activators for the Rho-type GTPases act by converting them to an inactive GDP-bound state. Has activity toward CDC42 and RAC1. This is Rho GTPase-activating protein 27 from Homo sapiens (Human).